A 228-amino-acid chain; its full sequence is Ribose-5-phosphate isomerase A (228 aa).

Substrate is bound by residues 29–32 (TGST), 84–87 (DGAD), and 97–100 (KGGG). Glu106 (proton acceptor) is an active-site residue. Position 124 (Lys124) interacts with substrate.

It belongs to the ribose 5-phosphate isomerase family. As to quaternary structure, homodimer.

It catalyses the reaction aldehydo-D-ribose 5-phosphate = D-ribulose 5-phosphate. It functions in the pathway carbohydrate degradation; pentose phosphate pathway; D-ribose 5-phosphate from D-ribulose 5-phosphate (non-oxidative stage): step 1/1. Catalyzes the reversible conversion of ribose-5-phosphate to ribulose 5-phosphate. The protein is Ribose-5-phosphate isomerase A of Sphingopyxis alaskensis (strain DSM 13593 / LMG 18877 / RB2256) (Sphingomonas alaskensis).